The primary structure comprises 399 residues: Small ribosomal subunit protein uS3m (399 aa).

This sequence belongs to the universal ribosomal protein uS3 family.

Its subcellular location is the mitochondrion. Functionally, essential for mitochondrial protein synthesis and required for the maturation of small ribosomal subunits. In Penicillium urticae, this protein is Small ribosomal subunit protein uS3m.